The chain runs to 220 residues: Ribosomal RNA large subunit methyltransferase E (220 aa).

S-adenosyl-L-methionine-binding residues include G60, W62, D92, D108, and D133. K173 acts as the Proton acceptor in catalysis. A disordered region spans residues 195–220 (APRKPKASRDKSSETFILGRHLKRPR).

It belongs to the class I-like SAM-binding methyltransferase superfamily. RNA methyltransferase RlmE family.

It localises to the cytoplasm. It carries out the reaction uridine(2552) in 23S rRNA + S-adenosyl-L-methionine = 2'-O-methyluridine(2552) in 23S rRNA + S-adenosyl-L-homocysteine + H(+). In terms of biological role, specifically methylates the uridine in position 2552 of 23S rRNA at the 2'-O position of the ribose in the fully assembled 50S ribosomal subunit. The sequence is that of Ribosomal RNA large subunit methyltransferase E from Burkholderia lata (strain ATCC 17760 / DSM 23089 / LMG 22485 / NCIMB 9086 / R18194 / 383).